A 757-amino-acid chain; its full sequence is Catalase-peroxidase (757 aa).

Residues 1–28 (MENQSNDISKCPFHNGSMDNQAASGTKN) form a disordered region. Residues 17 to 28 (SMDNQAASGTKN) are compositionally biased toward polar residues. Positions 100 to 247 (WHSAGTYRVH…LAAVQMGLIY (148 aa)) form a cross-link, tryptophyl-tyrosyl-methioninium (Trp-Tyr) (with M-273). Histidine 101 (proton acceptor) is an active-site residue. The segment at residues 247-273 (YVNPEGPDGNPDPILAAKDIRDTFGRM) is a cross-link (tryptophyl-tyrosyl-methioninium (Tyr-Met) (with W-100)). Histidine 288 provides a ligand contact to heme b.

This sequence belongs to the peroxidase family. Peroxidase/catalase subfamily. Homodimer or homotetramer. Heme b serves as cofactor. In terms of processing, formation of the three residue Trp-Tyr-Met cross-link is important for the catalase, but not the peroxidase activity of the enzyme.

The catalysed reaction is H2O2 + AH2 = A + 2 H2O. The enzyme catalyses 2 H2O2 = O2 + 2 H2O. In terms of biological role, bifunctional enzyme with both catalase and broad-spectrum peroxidase activity. The sequence is that of Catalase-peroxidase from Flavobacterium johnsoniae (strain ATCC 17061 / DSM 2064 / JCM 8514 / BCRC 14874 / CCUG 350202 / NBRC 14942 / NCIMB 11054 / UW101) (Cytophaga johnsonae).